Consider the following 375-residue polypeptide: Alcohol dehydrogenase B (375 aa).

7 residues coordinate Zn(2+): Cys40, His62, Cys92, Cys95, Cys98, Cys106, and Cys169.

Belongs to the zinc-containing alcohol dehydrogenase family. Zn(2+) is required as a cofactor.

It localises to the cytoplasm. The catalysed reaction is a primary alcohol + NAD(+) = an aldehyde + NADH + H(+). It carries out the reaction a secondary alcohol + NAD(+) = a ketone + NADH + H(+). This chain is Alcohol dehydrogenase B (adhB), found in Mycobacterium bovis (strain ATCC BAA-935 / AF2122/97).